We begin with the raw amino-acid sequence, 134 residues long: MKGRILILSLLIMSLVMAQVQVEAKICCPSNQARNGYSVCRIRFSKGRCMQVSGCQNSDTCPRGWVNAILENSADATNEHCKLGCETSVCGAMNTLQNSDASEIVNGASEQCAKGCSIFCTKSYVVPPGPPKLL.

The first 24 residues, 1–24, serve as a signal peptide directing secretion; sequence MKGRILILSLLIMSLVMAQVQVEA. 3 disulfide bridges follow: Cys-27/Cys-61, Cys-28/Cys-55, and Cys-40/Cys-49. A propeptide spans 68 to 134 (acidic domain); it reads AILENSADAT…VVPPGPPKLL (67 aa).

The protein belongs to the plant thionin (TC 1.C.44) family. Detected in rosette leaves and at a very high level in flowers and in siliques.

Its subcellular location is the secreted. Functionally, seems to function as a defense factor. Thionins are small plant proteins which are toxic to animal cells. They seem to exert their toxic effect at the level of the cell membrane. Their precise function is not known. The sequence is that of Thionin-2.1 (THI2.1) from Arabidopsis thaliana (Mouse-ear cress).